The sequence spans 588 residues: Tannase (588 aa).

The first 18 residues, 1–18, serve as a signal peptide directing secretion; the sequence is MRQHSRMAVAALAAGANA. 3 disulfide bridges follow: Cys25-Cys71, Cys194-Cys502, and Cys261-Cys278. The active-site Acyl-ester intermediate is Ser195. Ca(2+) is bound by residues Asp262, Asp265, Asp269, and Val271. The residue at position 317 (Gln317) is a Pyrrolidone carboxylic acid. Active-site charge relay system residues include Asp455 and His501.

Belongs to the tannase family. Heterooctamer of 4 33 kDa and 4 30 kDa subunits linked by disulfide bond(s). The protein is glycosylated to a carbohydrate content of 22.7%. Post-translationally, the N-terminus of the 30 kDa subunit is blocked.

It carries out the reaction digallate + H2O = 2 3,4,5-trihydroxybenzoate + H(+). Its function is as follows. Hydrolyzes ester bonds of tannic acid to produce gallic acid and glucose. The polypeptide is Tannase (Aspergillus oryzae (strain ATCC 42149 / RIB 40) (Yellow koji mold)).